We begin with the raw amino-acid sequence, 109 residues long: Elicitor peptide 2 (109 aa).

A propeptide spanning residues 1–73 is cleaved from the precursor; that stretch reads MEKLDKRREE…KDDDVVVLLR (73 aa). A compositionally biased stretch (basic and acidic residues) spans 74 to 88; the sequence is DNKAKSKKRDKEKPS. The tract at residues 74-109 is disordered; it reads DNKAKSKKRDKEKPSSGRPGQTNSVPNAAIQVYKED.

The protein belongs to the brassicaceae elicitor peptide family.

Its function is as follows. Elicitor of plant defense. The chain is Elicitor peptide 2 (PEP2) from Arabidopsis thaliana (Mouse-ear cress).